Here is a 389-residue protein sequence, read N- to C-terminus: Dirigent protein 25 (389 aa).

The N-terminal stretch at 1–21 (MAGCKVLFFLILALAITFVSA) is a signal peptide. 3 stretches are compositionally biased toward low complexity: residues 50–68 (GPFP…SGTG), 77–86 (LGTNTGPGPL), and 98–135 (SSGT…PLPT). The disordered stretch occupies residues 50–135 (GPFPTANSGP…PGSGSGPLPT (86 aa)).

It belongs to the plant dirigent protein family. In terms of assembly, homodimer.

The protein resides in the secreted. It is found in the extracellular space. It localises to the apoplast. In terms of biological role, dirigent proteins impart stereoselectivity on the phenoxy radical-coupling reaction, yielding optically active lignans from two molecules of coniferyl alcohol in the biosynthesis of lignans, flavonolignans, and alkaloids and thus plays a central role in plant secondary metabolism. In Arabidopsis thaliana (Mouse-ear cress), this protein is Dirigent protein 25 (DIR25).